A 727-amino-acid chain; its full sequence is Engulfment and cell motility protein 1 (727 aa).

Residue Y18 is modified to Phosphotyrosine; by HCK. Residues K100 and K105 each carry the N6-acetyllysine modification. Y216 bears the Phosphotyrosine; by HCK mark. In terms of domain architecture, ELMO spans 319–492 (AQRDIIFELR…VVKEQVMRAL (174 aa)). The residue at position 344 (S344) is a Phosphoserine. 2 positions are modified to phosphotyrosine; by HCK: Y395 and Y511. Residues 555 to 676 (RLVEGTCFRK…DGLNALLGKD (122 aa)) enclose the PH domain. An SH3-binding motif is present at residues 707–714 (PDAPPPIP). Y720 carries the phosphotyrosine; by HCK modification.

As to quaternary structure, interacts directly with the SH3-domain of DOCK1 via its SH3-binding site. Probably forms a heterotrimeric complex with DOCK1 and RAC1. Interacts with PLEKHG6. Interacts with HCK (via SH3 domain). Interacts with ADGRB1. Interacts with ADGRB3. Interacts with DOCK5. Post-translationally, phosphorylated by HCK.

It localises to the cytoplasm. Its subcellular location is the cell membrane. Functionally, involved in cytoskeletal rearrangements required for phagocytosis of apoptotic cells and cell motility. Acts in association with DOCK1 and CRK. Was initially proposed to be required in complex with DOCK1 to activate Rac Rho small GTPases. May enhance the guanine nucleotide exchange factor (GEF) activity of DOCK1. The polypeptide is Engulfment and cell motility protein 1 (Elmo1) (Mus musculus (Mouse)).